Here is a 369-residue protein sequence, read N- to C-terminus: Iron-sulfur cluster assembly SufBD family protein AF_2365 (369 aa).

The protein belongs to the iron-sulfur cluster assembly SufBD family.

This chain is Iron-sulfur cluster assembly SufBD family protein AF_2365, found in Archaeoglobus fulgidus (strain ATCC 49558 / DSM 4304 / JCM 9628 / NBRC 100126 / VC-16).